We begin with the raw amino-acid sequence, 361 residues long: Eukaryotic translation initiation factor 3 subunit F (361 aa).

Residues M1 to L86 are disordered. Residue A2 is modified to N-acetylalanine. 2 stretches are compositionally biased toward pro residues: residues S9 to A20 and V30 to A40. A compositionally biased stretch (low complexity) spans P41–A78. S50 carries the post-translational modification Phosphoserine; by CDK11; in vitro. An MPN domain is found at V96 to G226. An N6-acetyllysine modification is found at K242. Phosphoserine is present on S262.

It belongs to the eIF-3 subunit F family. As to quaternary structure, component of the eukaryotic translation initiation factor 3 (eIF-3) complex, which is composed of 13 subunits: EIF3A, EIF3B, EIF3C, EIF3D, EIF3E, EIF3F, EIF3G, EIF3H, EIF3I, EIF3J, EIF3K, EIF3L and EIF3M. The eIF-3 complex appears to include 3 stable modules: module A is composed of EIF3A, EIF3B, EIF3G and EIF3I; module B is composed of EIF3F, EIF3H, and EIF3M; and module C is composed of EIF3C, EIF3D, EIF3E, EIF3K and EIF3L. EIF3C of module C binds EIF3B of module A and EIF3H of module B, thereby linking the three modules. EIF3J is a labile subunit that binds to the eIF-3 complex via EIF3B. The eIF-3 complex interacts with RPS6KB1 under conditions of nutrient depletion. Mitogenic stimulation leads to binding and activation of a complex composed of MTOR and RPTOR, leading to phosphorylation and release of RPS6KB1 and binding of EIF4B to eIF-3. Interacts with RNF139; the interaction leads to protein translation inhibitions in a ubiquitination-dependent manner. Interacts with DTX1, the interaction is required for deubiquitinating activity towards NOTCH1. Post-translationally, phosphorylation is enhanced upon serum stimulation. Phosphorylated during apoptosis by caspase-processed CDK11.

The protein localises to the cytoplasm. It carries out the reaction Thiol-dependent hydrolysis of ester, thioester, amide, peptide and isopeptide bonds formed by the C-terminal Gly of ubiquitin (a 76-residue protein attached to proteins as an intracellular targeting signal).. Its function is as follows. Component of the eukaryotic translation initiation factor 3 (eIF-3) complex, which is required for several steps in the initiation of protein synthesis. The eIF-3 complex associates with the 40S ribosome and facilitates the recruitment of eIF-1, eIF-1A, eIF-2:GTP:methionyl-tRNAi and eIF-5 to form the 43S pre-initiation complex (43S PIC). The eIF-3 complex stimulates mRNA recruitment to the 43S PIC and scanning of the mRNA for AUG recognition. The eIF-3 complex is also required for disassembly and recycling of post-termination ribosomal complexes and subsequently prevents premature joining of the 40S and 60S ribosomal subunits prior to initiation. The eIF-3 complex specifically targets and initiates translation of a subset of mRNAs involved in cell proliferation, including cell cycling, differentiation and apoptosis, and uses different modes of RNA stem-loop binding to exert either translational activation or repression. In terms of biological role, deubiquitinates activated NOTCH1, promoting its nuclear import, thereby acting as a positive regulator of Notch signaling. The chain is Eukaryotic translation initiation factor 3 subunit F from Pan troglodytes (Chimpanzee).